A 416-amino-acid chain; its full sequence is NADH-quinone oxidoreductase subunit D (416 aa).

This sequence belongs to the complex I 49 kDa subunit family. As to quaternary structure, NDH-1 is composed of 14 different subunits. Subunits NuoB, C, D, E, F, and G constitute the peripheral sector of the complex.

The protein resides in the cell inner membrane. The catalysed reaction is a quinone + NADH + 5 H(+)(in) = a quinol + NAD(+) + 4 H(+)(out). NDH-1 shuttles electrons from NADH, via FMN and iron-sulfur (Fe-S) centers, to quinones in the respiratory chain. The immediate electron acceptor for the enzyme in this species is believed to be ubiquinone. Couples the redox reaction to proton translocation (for every two electrons transferred, four hydrogen ions are translocated across the cytoplasmic membrane), and thus conserves the redox energy in a proton gradient. This Gluconacetobacter diazotrophicus (strain ATCC 49037 / DSM 5601 / CCUG 37298 / CIP 103539 / LMG 7603 / PAl5) protein is NADH-quinone oxidoreductase subunit D.